The primary structure comprises 252 residues: Triosephosphate isomerase (252 aa).

Substrate is bound at residue 10 to 12 (NWK). H96 functions as the Electrophile in the catalytic mechanism. Residue E168 is the Proton acceptor of the active site. Residues G174, S214, and 235–236 (GG) contribute to the substrate site.

Belongs to the triosephosphate isomerase family. In terms of assembly, homodimer.

Its subcellular location is the cytoplasm. The enzyme catalyses D-glyceraldehyde 3-phosphate = dihydroxyacetone phosphate. It functions in the pathway carbohydrate biosynthesis; gluconeogenesis. The protein operates within carbohydrate degradation; glycolysis; D-glyceraldehyde 3-phosphate from glycerone phosphate: step 1/1. In terms of biological role, involved in the gluconeogenesis. Catalyzes stereospecifically the conversion of dihydroxyacetone phosphate (DHAP) to D-glyceraldehyde-3-phosphate (G3P). The sequence is that of Triosephosphate isomerase from Streptococcus gordonii (strain Challis / ATCC 35105 / BCRC 15272 / CH1 / DL1 / V288).